The primary structure comprises 613 residues: Azole resistance protein 1 (613 aa).

The tract at residues 1–38 (MKGEPKTYSMSDLSYYGEKAQQQNEKQQKQYVVRRNST) is disordered. At 1–70 (MKGEPKTYSM…PKGFILYASL (70 aa)) the chain is on the extracellular side. The chain crosses the membrane as a helical span at residues 71-91 (IALALSLFLAALDIMIVSTII). Residues 92 to 102 (EEVAKQFGSYS) lie on the Cytoplasmic side of the membrane. Residues 103 to 123 (EIGWLFTGYSLPNALLALIWG) form a helical membrane-spanning segment. Over 124–134 (RIATPIGFKET) the chain is Extracellular. A helical transmembrane segment spans residues 135–155 (MLFAIVIFEIGSLISALANSM). The Cytoplasmic portion of the chain corresponds to 156 to 163 (SMLIGGRV). A helical membrane pass occupies residues 164–184 (IAGVGGCGIQSLSFVIGSTLV). Residues 185–189 (EESQR) are Extracellular-facing. Residues 190–210 (GILIAVLSCSFAIASVVGPFL) form a helical membrane-spanning segment. At 211–221 (GGVFTSSVTWR) the chain is on the cytoplasmic side. The chain crosses the membrane as a helical span at residues 222 to 242 (WCFYVNLPIGGLAFFLFLFFY). Residues 243–298 (NPGLSTFQETMDNIRKFPSQFIEIVRNVAYHLLKIKGFSKLNGWRKPFMELIFMYD) are Extracellular-facing. A helical transmembrane segment spans residues 299–319 (IIEFVFCSAGFTCILLAFTFG). At 320–329 (GNRYAWNSAS) the chain is on the cytoplasmic side. Residues 330 to 350 (IIILFIIGIVLVVLAGIYDFL) form a helical membrane-spanning segment. Topologically, residues 351–375 (VFPKFNIVKATPHYQPLMSWTNIKK) are extracellular. Residues 376–396 (PGIFTVNIALFLTCAGYISQF) form a helical membrane-spanning segment. The Cytoplasmic segment spans residues 397 to 414 (TYIVQYFQLIYNDSAWRA). Residues 415–435 (AVHLVACIISTVVTAILCGAI) form a helical membrane-spanning segment. Residues 436–443 (TDKTRQIK) are Extracellular-facing. Residues 444–464 (PIIVISSIFGVVGAGILTLLN) form a helical membrane-spanning segment. Over 465–472 (NNANNSAH) the chain is Cytoplasmic. The chain crosses the membrane as a helical span at residues 473-493 (IGLLILPGVAFGGLAQSSMLA). Topologically, residues 494–581 (SQIQLDKKSP…SKLGNIISES (88 aa)) are extracellular. Residues 582–602 (LTDVFYMALGFYALSLIFAVF) form a helical membrane-spanning segment. Topologically, residues 603–613 (ASNKKVTASLR) are cytoplasmic.

This sequence belongs to the major facilitator superfamily.

It localises to the cell membrane. Functionally, transporter protein required for adaptation to high stress imposed by low-chain organic acids, in particular by acetic acid, and for resistance to azoles, especially to ketoconazole and fluconazole. This is Azole resistance protein 1 (AZR1) from Saccharomyces cerevisiae (strain ATCC 204508 / S288c) (Baker's yeast).